Here is a 103-residue protein sequence, read N- to C-terminus: Pyrimidine/purine nucleoside phosphorylase (103 aa).

The protein belongs to the nucleoside phosphorylase PpnP family.

The catalysed reaction is a purine D-ribonucleoside + phosphate = a purine nucleobase + alpha-D-ribose 1-phosphate. It catalyses the reaction adenosine + phosphate = alpha-D-ribose 1-phosphate + adenine. It carries out the reaction cytidine + phosphate = cytosine + alpha-D-ribose 1-phosphate. The enzyme catalyses guanosine + phosphate = alpha-D-ribose 1-phosphate + guanine. The catalysed reaction is inosine + phosphate = alpha-D-ribose 1-phosphate + hypoxanthine. It catalyses the reaction thymidine + phosphate = 2-deoxy-alpha-D-ribose 1-phosphate + thymine. It carries out the reaction uridine + phosphate = alpha-D-ribose 1-phosphate + uracil. The enzyme catalyses xanthosine + phosphate = alpha-D-ribose 1-phosphate + xanthine. Catalyzes the phosphorolysis of diverse nucleosides, yielding D-ribose 1-phosphate and the respective free bases. Can use uridine, adenosine, guanosine, cytidine, thymidine, inosine and xanthosine as substrates. Also catalyzes the reverse reactions. This chain is Pyrimidine/purine nucleoside phosphorylase, found in Shewanella frigidimarina (strain NCIMB 400).